The following is a 284-amino-acid chain: Putative ABC transporter ATP-binding protein tll2439 (284 aa).

Positions 6–242 (LEFHQVGFRY…WPTFAPELGT (237 aa)) constitute an ABC transporter domain. 40 to 47 (GLNGSGKS) lines the ATP pocket.

This sequence belongs to the ABC transporter superfamily.

It localises to the cell inner membrane. In terms of biological role, probably part of an ABC transporter complex. Responsible for energy coupling to the transport system. The chain is Putative ABC transporter ATP-binding protein tll2439 from Thermosynechococcus vestitus (strain NIES-2133 / IAM M-273 / BP-1).